We begin with the raw amino-acid sequence, 504 residues long: Pyrichalasin C-7 hydroxylase (504 aa).

Residues 1–17 form the signal peptide; it reads MLNSAACIVLAITAVLG. Cysteine 449 serves as a coordination point for heme.

This sequence belongs to the cytochrome P450 family. It depends on heme as a cofactor.

It participates in mycotoxin biosynthesis. Cytochrome P450 monooxygenase; part of the gene cluster that mediates the biosynthesis of the mycotoxin pyrichalasin H, a tyrosine-derived cytochalasan that inhibits the growth of rice seedlings, but also inhibits lymphocyte capping and actin polymerization and alters cell morphology. Pyrichalasin H is indicated as the responsible agent for the genus-specific pathogenicity of M.grisea toward crabgrass. The first step in the pathway is catalyzed by the O-methyltransferase pyiA which methylates free tyrosine to generate the precursor O-methyltyrosine. The hybrid PKS-NRPS pyiS, assisted by the enoyl reductase pyiC, are responsible for fusion of the O-methyltyrosine precursor and the polyketide backbone. The polyketide synthase module (PKS) of pyiS is responsible for the synthesis of the polyketide backbone and the downstream nonribosomal peptide synthetase (NRPS) amidates the carboxyl end of the polyketide with the O-methyltyrosine precursor. As the NRPS A-domain demonstrates substrate tolerance, pyiS can also use phenylalanine, tyrosine and even para-chlorophenylalanine as amino acid precursor, which leads to the production of novel cytochalasans, including halogenated cytochalasans. Because pyiS lacks a designated enoylreductase (ER) domain, the required activity is provided the enoyl reductase pyiC. Reduction by the hydrolyase pyiE leads to 1,5-dihydropyrrolone, which is substrate for dehydration and intra-molecular Diels-Alder cyclization by the Diels-Alderase pyiF to yield the required isoindolone-fused macrocycle. The tailoring cytochrome P450 monooxygenases piyD and piyG catalyze the hydroxylation at C-18 and C-7, respectivily, whereas the short-chain dehydrogenase/reductase pyiH reduces the carbonyl at C-21 in preparation for the transfer of an acetyl group by the acetyltransferase pyiB. These 3 reactions whose order is not clear yet, lead to the production of O-methylpyrichalasin J, a deacetylated pyrichalasin H. Finally, pyiB to converts O-methylpyrichalasin J into the final product pyrichalasin H via acetylation of C-21. This Pyricularia grisea (Crabgrass-specific blast fungus) protein is Pyrichalasin C-7 hydroxylase.